The following is a 2198-amino-acid chain: RNA-directed RNA polymerase L (2198 aa).

The endonuclease stretch occupies residues 26-284 (KEALLSQVEV…AHSDSLAPEC (259 aa)). Mn(2+)-binding residues include Glu51, Asp89, and Glu102. Lys115 is an active-site residue. The 199-residue stretch at 1161-1359 (CDMKMAVNNG…FLSSKFNKFV (199 aa)) folds into the RdRp catalytic domain. Asp1319 is a Mg(2+) binding site.

It belongs to the Bunyavirales RNA polymerase family. As to quaternary structure, homomultimer; the oligomeric structure is essential for the polymerase activity. Interacts with nucleoprotein N. Interacts with protein Z; this interaction inhibits viral transcription and replication, Z partially blocks the product exit tunnel for the releasing nascent RNA product. Mn(2+) serves as cofactor. The cofactor is Mg(2+).

It localises to the virion. The protein resides in the host cytoplasm. It catalyses the reaction RNA(n) + a ribonucleoside 5'-triphosphate = RNA(n+1) + diphosphate. In terms of biological role, RNA-dependent RNA polymerase, which is responsible for the replication and transcription of the viral RNA genome using antigenomic RNA as an intermediate. During transcription, synthesizes subgenomic RNAs and assures their capping by a cap-snatching mechanism, which involves the endonuclease activity cleaving the host capped pre-mRNAs. These short capped RNAs are then used as primers for viral transcription. The 3'-end of subgenomic mRNAs molecules are heterogeneous and not polyadenylated. The replicase function is to direct synthesis of antigenomic and genomic RNA which are encapsidated and non capped. As a consequence of the use of the same enzyme for both transcription and replication, these mechanisms need to be well coordinated. These processes may be regulated by proteins N and Z in a dose-dependent manner. Z protein inhibits the viral polymerase L und thus the viral transcription and RNA synthesis. This is RNA-directed RNA polymerase L from Homo sapiens (Human).